The sequence spans 210 residues: MSPGILGKKIGMTQIFRPDGQVVPVTLLKAGPCMVVQRKTPSTDGYDAVQLGLVEFIKPQRINKPTAGRLKKAGVEGAKFMREFTLGPGSDDLKTGDQVLVDQFKPKDKVDVVGISKGKGFAGVVKRHHFRGGEGSHGSMFHRAPGSIGASSFPSRVVPGMRMGGHLGNAQVTVRNLEVIDVDTEDNVLVVKGAVPGPNGGYVLVRRSKR.

It belongs to the universal ribosomal protein uL3 family. In terms of assembly, part of the 50S ribosomal subunit. Forms a cluster with proteins L14 and L19.

Its function is as follows. One of the primary rRNA binding proteins, it binds directly near the 3'-end of the 23S rRNA, where it nucleates assembly of the 50S subunit. This is Large ribosomal subunit protein uL3 from Solibacter usitatus (strain Ellin6076).